Here is a 463-residue protein sequence, read N- to C-terminus: Siroheme synthase (463 aa).

A precorrin-2 dehydrogenase /sirohydrochlorin ferrochelatase region spans residues 1–203; sequence MDYLPLFHKL…GQGAEAERLL (203 aa). NAD(+) contacts are provided by residues 22–23 and 43–44; these read EI and PD. Ser128 carries the post-translational modification Phosphoserine. The uroporphyrinogen-III C-methyltransferase stretch occupies residues 216–463; it reads GEVYLVGAGP…LAWFEGSQNS (248 aa). Position 225 (Pro225) interacts with S-adenosyl-L-methionine. Catalysis depends on Asp248, which acts as the Proton acceptor. Lys270 serves as the catalytic Proton donor. Residues 301–303, Ile306, 331–332, Met383, and Gly412 each bind S-adenosyl-L-methionine; these read GGD and TA.

It in the N-terminal section; belongs to the precorrin-2 dehydrogenase / sirohydrochlorin ferrochelatase family. The protein in the C-terminal section; belongs to the precorrin methyltransferase family.

It carries out the reaction uroporphyrinogen III + 2 S-adenosyl-L-methionine = precorrin-2 + 2 S-adenosyl-L-homocysteine + H(+). The catalysed reaction is precorrin-2 + NAD(+) = sirohydrochlorin + NADH + 2 H(+). It catalyses the reaction siroheme + 2 H(+) = sirohydrochlorin + Fe(2+). Its pathway is cofactor biosynthesis; adenosylcobalamin biosynthesis; precorrin-2 from uroporphyrinogen III: step 1/1. It functions in the pathway cofactor biosynthesis; adenosylcobalamin biosynthesis; sirohydrochlorin from precorrin-2: step 1/1. It participates in porphyrin-containing compound metabolism; siroheme biosynthesis; precorrin-2 from uroporphyrinogen III: step 1/1. The protein operates within porphyrin-containing compound metabolism; siroheme biosynthesis; siroheme from sirohydrochlorin: step 1/1. Its pathway is porphyrin-containing compound metabolism; siroheme biosynthesis; sirohydrochlorin from precorrin-2: step 1/1. Its function is as follows. Multifunctional enzyme that catalyzes the SAM-dependent methylations of uroporphyrinogen III at position C-2 and C-7 to form precorrin-2 via precorrin-1. Then it catalyzes the NAD-dependent ring dehydrogenation of precorrin-2 to yield sirohydrochlorin. Finally, it catalyzes the ferrochelation of sirohydrochlorin to yield siroheme. In Pseudomonas putida (strain ATCC 700007 / DSM 6899 / JCM 31910 / BCRC 17059 / LMG 24140 / F1), this protein is Siroheme synthase.